Here is a 238-residue protein sequence, read N- to C-terminus: Ribosomal RNA small subunit methyltransferase G (238 aa).

S-adenosyl-L-methionine-binding positions include glycine 77, phenylalanine 82, 128 to 129 (AE), and arginine 147. The tract at residues 219 to 238 (KKTPARYPRKPGTPNKQPIQ) is disordered.

It belongs to the methyltransferase superfamily. RNA methyltransferase RsmG family.

The protein localises to the cytoplasm. Specifically methylates the N7 position of guanine in position 535 of 16S rRNA. This is Ribosomal RNA small subunit methyltransferase G from Geobacillus thermodenitrificans (strain NG80-2).